A 525-amino-acid chain; its full sequence is Peptide chain release factor 3 (525 aa).

The tr-type G domain occupies asparagine 11–serine 279. GTP-binding positions include serine 20–threonine 27, aspartate 88–histidine 92, and asparagine 142–aspartate 145.

It belongs to the TRAFAC class translation factor GTPase superfamily. Classic translation factor GTPase family. PrfC subfamily.

It localises to the cytoplasm. Increases the formation of ribosomal termination complexes and stimulates activities of RF-1 and RF-2. It binds guanine nucleotides and has strong preference for UGA stop codons. It may interact directly with the ribosome. The stimulation of RF-1 and RF-2 is significantly reduced by GTP and GDP, but not by GMP. This is Peptide chain release factor 3 from Limosilactobacillus reuteri (strain DSM 20016) (Lactobacillus reuteri).